The sequence spans 127 residues: Lymphocyte antigen 6D (127 aa).

Residues 1 to 20 (MKTALLVLLVLAVATSPAWA) form the signal peptide. The 88-residue stretch at 21–108 (LRCHVCTNSA…AAPGHALLSS (88 aa)) folds into the UPAR/Ly6 domain. 5 disulfide bridges follow: C23–C45, C26–C32, C38–C63, C67–C86, and C87–C92. S98 carries the GPI-anchor amidated serine lipid modification. Positions 99 to 127 (AAPGHALLSSVTLGLATSLSLLTVMALCL) are cleaved as a propeptide — removed in mature form.

In terms of tissue distribution, lymphoid cells lacking Ly6d, called ALP (all-lymphoid progenitor), retain full lymphoid potential and early thymic seeding activity, whereas cells containing Ly6d, called BLP (B-cell-biased lymphoid progenitor), up-regulate the B-cell specifying factors Ebf1 and Pax5 and behave essentially as B-cell progenitors (at protein level). Thymocytes and B-cells.

The protein resides in the cell membrane. Functionally, may act as a specification marker at earliest stage specification of lymphocytes between B- and T-cell development. Marks the earliest stage of B-cell specification. The polypeptide is Lymphocyte antigen 6D (Ly6d) (Mus musculus (Mouse)).